We begin with the raw amino-acid sequence, 178 residues long: Large ribosomal subunit protein uL6 (178 aa).

The protein belongs to the universal ribosomal protein uL6 family. Part of the 50S ribosomal subunit.

In terms of biological role, this protein binds to the 23S rRNA, and is important in its secondary structure. It is located near the subunit interface in the base of the L7/L12 stalk, and near the tRNA binding site of the peptidyltransferase center. The chain is Large ribosomal subunit protein uL6 from Sulfurovum sp. (strain NBC37-1).